A 212-amino-acid chain; its full sequence is Imidazole glycerol phosphate synthase subunit HisH (212 aa).

Positions 2-212 (QTAIIDYGMG…LTMLKNFLNW (211 aa)) constitute a Glutamine amidotransferase type-1 domain. C85 serves as the catalytic Nucleophile. Catalysis depends on residues H194 and E196.

In terms of assembly, heterodimer of HisH and HisF.

The protein resides in the cytoplasm. It catalyses the reaction 5-[(5-phospho-1-deoxy-D-ribulos-1-ylimino)methylamino]-1-(5-phospho-beta-D-ribosyl)imidazole-4-carboxamide + L-glutamine = D-erythro-1-(imidazol-4-yl)glycerol 3-phosphate + 5-amino-1-(5-phospho-beta-D-ribosyl)imidazole-4-carboxamide + L-glutamate + H(+). It carries out the reaction L-glutamine + H2O = L-glutamate + NH4(+). It participates in amino-acid biosynthesis; L-histidine biosynthesis; L-histidine from 5-phospho-alpha-D-ribose 1-diphosphate: step 5/9. Functionally, IGPS catalyzes the conversion of PRFAR and glutamine to IGP, AICAR and glutamate. The HisH subunit catalyzes the hydrolysis of glutamine to glutamate and ammonia as part of the synthesis of IGP and AICAR. The resulting ammonia molecule is channeled to the active site of HisF. This chain is Imidazole glycerol phosphate synthase subunit HisH (hisH), found in Neisseria meningitidis serogroup B (strain ATCC BAA-335 / MC58).